Reading from the N-terminus, the 330-residue chain is Aspartate--ammonia ligase (330 aa).

It belongs to the class-II aminoacyl-tRNA synthetase family. AsnA subfamily.

It is found in the cytoplasm. The enzyme catalyses L-aspartate + NH4(+) + ATP = L-asparagine + AMP + diphosphate + H(+). Its pathway is amino-acid biosynthesis; L-asparagine biosynthesis; L-asparagine from L-aspartate (ammonia route): step 1/1. The protein is Aspartate--ammonia ligase of Klebsiella pneumoniae subsp. pneumoniae (strain ATCC 700721 / MGH 78578).